The chain runs to 239 residues: Ribosomal RNA small subunit methyltransferase G (239 aa).

S-adenosyl-L-methionine is bound by residues Gly80, Phe85, 103 to 105 (EAS), 131 to 132 (AE), and Arg150.

It belongs to the methyltransferase superfamily. RNA methyltransferase RsmG family.

Its subcellular location is the cytoplasm. In terms of biological role, specifically methylates the N7 position of a guanine in 16S rRNA. In Caldanaerobacter subterraneus subsp. tengcongensis (strain DSM 15242 / JCM 11007 / NBRC 100824 / MB4) (Thermoanaerobacter tengcongensis), this protein is Ribosomal RNA small subunit methyltransferase G.